Reading from the N-terminus, the 131-residue chain is Small ribosomal subunit protein uS8 (131 aa).

It belongs to the universal ribosomal protein uS8 family. In terms of assembly, part of the 30S ribosomal subunit. Contacts proteins S5 and S12.

Its function is as follows. One of the primary rRNA binding proteins, it binds directly to 16S rRNA central domain where it helps coordinate assembly of the platform of the 30S subunit. This is Small ribosomal subunit protein uS8 from Acidithiobacillus ferrooxidans (strain ATCC 23270 / DSM 14882 / CIP 104768 / NCIMB 8455) (Ferrobacillus ferrooxidans (strain ATCC 23270)).